Consider the following 564-residue polypeptide: MFS-type transporter kojT (564 aa).

The N-linked (GlcNAc...) asparagine glycan is linked to asparagine 113. 12 helical membrane-spanning segments follow: residues 120-140 (WATL…SSID), 159-179 (SLAT…AAPF), 187-207 (PVYI…GLAP), 217-237 (FLAG…MADI), 249-269 (VCCT…AFIG), 278-298 (WTEW…FLFV), 353-373 (IMVA…FGFL), 389-409 (GSVG…FAMV), 437-457 (LWFA…MGWT), 462-482 (ISYW…QGIF), 500-520 (ALVS…IVSI), and 530-550 (WSLT…YIFY).

Belongs to the major facilitator superfamily.

Its subcellular location is the cell membrane. In terms of biological role, MFS-type transporter; part of the gene cluster that mediates the biosynthesis of 5-hydroxy-2-hydroxymethyl-1,4-pyrone, also know as kojic acid, a by-product in the fermentation process of malting rice that acts as a chelation agent. Involved in the seretion of kojic acid. The chain is MFS-type transporter kojT from Aspergillus flavus (strain ATCC 200026 / FGSC A1120 / IAM 13836 / NRRL 3357 / JCM 12722 / SRRC 167).